Reading from the N-terminus, the 122-residue chain is Large ribosomal subunit protein uL14 (122 aa).

It belongs to the universal ribosomal protein uL14 family. As to quaternary structure, part of the 50S ribosomal subunit. Forms a cluster with proteins L3 and L19. In the 70S ribosome, L14 and L19 interact and together make contacts with the 16S rRNA in bridges B5 and B8.

Functionally, binds to 23S rRNA. Forms part of two intersubunit bridges in the 70S ribosome. This is Large ribosomal subunit protein uL14 from Brucella anthropi (strain ATCC 49188 / DSM 6882 / CCUG 24695 / JCM 21032 / LMG 3331 / NBRC 15819 / NCTC 12168 / Alc 37) (Ochrobactrum anthropi).